Here is a 45-residue protein sequence, read N- to C-terminus: Large ribosomal subunit protein bL34c (45 aa).

This sequence belongs to the bacterial ribosomal protein bL34 family.

It localises to the plastid. It is found in the chloroplast. This Emiliania huxleyi (Coccolithophore) protein is Large ribosomal subunit protein bL34c.